The sequence spans 369 residues: Type 2 DNA topoisomerase 6 subunit A (369 aa).

Residues 11–149 enclose the Topo IIA-type catalytic domain; that stretch reads QRDLLAREKL…FHMRPEEDGA (139 aa). The active-site O-(5'-phospho-DNA)-tyrosine intermediate is the tyrosine 106. Positions 202 and 254 each coordinate Mg(2+).

Belongs to the TOP6A family. Homodimer. Heterotetramer of two Top6A and two Top6B chains. Mg(2+) serves as cofactor.

The enzyme catalyses ATP-dependent breakage, passage and rejoining of double-stranded DNA.. Relaxes both positive and negative superturns and exhibits a strong decatenase activity. This chain is Type 2 DNA topoisomerase 6 subunit A, found in Methanosarcina barkeri (strain Fusaro / DSM 804).